The chain runs to 204 residues: Inositol diphosphatase DSP2 (204 aa).

Residues 1 to 27 (MQLEISPRQRSQQQKEEEGEHQQRAGE) are disordered. Over residues 13 to 27 (QQKEEEGEHQQRAGE) the composition is skewed to basic and acidic residues. The Tyrosine-protein phosphatase domain maps to 51–203 (NFAEVNDGIF…SSLMHLTASQ (153 aa)). The interval 107 to 119 (FGIDGSKELLVNI) is WPD loop important for active site topology. Residues Asn-118, Ile-119, and Lys-123 each coordinate 1D-myo-inositol hexakisphosphate. Cys-143 serves as the catalytic Phosphocysteine intermediate.

The protein belongs to the protein-tyrosine phosphatase family. Atypical dual-specificity phosphatase Siw14-like subfamily. In terms of tissue distribution, expressed in roots and young panicles.

It is found in the cytoplasm. Its subcellular location is the nucleus. It catalyses the reaction 5-diphospho-1D-myo-inositol 1,2,3,4,6-pentakisphosphate + H2O = 1D-myo-inositol hexakisphosphate + phosphate + H(+). The enzyme catalyses 1,5-bis(diphospho)-1D-myo-inositol 2,3,4,6-tetrakisphosphate + H2O = 1-diphospho-1D-myo-inositol 2,3,4,5,6-pentakisphosphate + phosphate + 2 H(+). It carries out the reaction 3,5-bis(diphospho)-1D-myo-inositol 1,2,4,6-tetrakisphosphate + H2O = 3-diphospho-1D-myo-inositol 1,2,4,5,6-pentakisphosphate + phosphate + 2 H(+). The catalysed reaction is 6-diphospho-1D-myo-inositol pentakisphosphate + H2O = 1D-myo-inositol hexakisphosphate + phosphate + H(+). Cleaves the beta-phosphate at the 5-position of soluble inositol pyrophosphates. Has highest activity on 5-diphosphoinositol 1,2,3,4,6-pentakisphosphate (5-InsP(7)). Acts as a negative regulator of defense responses against the fungal pathogen Magnaporthe oryzae. The polypeptide is Inositol diphosphatase DSP2 (Oryza sativa subsp. japonica (Rice)).